Consider the following 426-residue polypeptide: Serine/threonine-protein kinase ssn3 (426 aa).

In terms of domain architecture, Protein kinase spans 41-368; sequence YHIVGFISSG…AREALEHPYF (328 aa). ATP-binding positions include 47 to 55 and K71; that span reads ISSGTYGRV. Catalysis depends on D173, which acts as the Proton acceptor. Residues 390–426 form a disordered region; it reads RVTQDDNDIRSGSLPGTKRSGLPDDSLMGRAAKRLKE.

It belongs to the protein kinase superfamily. CMGC Ser/Thr protein kinase family. CDC2/CDKX subfamily. In terms of assembly, component of the srb8-11 complex, a regulatory module of the Mediator complex. Mg(2+) serves as cofactor.

The protein localises to the nucleus. It carries out the reaction L-seryl-[protein] + ATP = O-phospho-L-seryl-[protein] + ADP + H(+). The enzyme catalyses L-threonyl-[protein] + ATP = O-phospho-L-threonyl-[protein] + ADP + H(+). The catalysed reaction is [DNA-directed RNA polymerase] + ATP = phospho-[DNA-directed RNA polymerase] + ADP + H(+). Functionally, component of the srb8-11 complex. The srb8-11 complex is a regulatory module of the Mediator complex which is itself involved in regulation of basal and activated RNA polymerase II-dependent transcription. The srb8-11 complex may be involved in the transcriptional repression of a subset of genes regulated by Mediator. It may inhibit the association of the Mediator complex with RNA polymerase II to form the holoenzyme complex. The srb8-11 complex phosphorylates the C-terminal domain (CTD) of the largest subunit of RNA polymerase II. The protein is Serine/threonine-protein kinase ssn3 (ssn3) of Aspergillus fumigatus (strain ATCC MYA-4609 / CBS 101355 / FGSC A1100 / Af293) (Neosartorya fumigata).